The primary structure comprises 514 residues: Proline--tRNA ligase (514 aa).

It belongs to the class-II aminoacyl-tRNA synthetase family. ProS type 3 subfamily. In terms of assembly, homodimer.

The protein resides in the cytoplasm. It catalyses the reaction tRNA(Pro) + L-proline + ATP = L-prolyl-tRNA(Pro) + AMP + diphosphate. Functionally, catalyzes the attachment of proline to tRNA(Pro) in a two-step reaction: proline is first activated by ATP to form Pro-AMP and then transferred to the acceptor end of tRNA(Pro). In Erythrobacter litoralis (strain HTCC2594), this protein is Proline--tRNA ligase.